Here is an 84-residue protein sequence, read N- to C-terminus: Cell division topological specificity factor (84 aa).

It belongs to the MinE family.

Prevents the cell division inhibition by proteins MinC and MinD at internal division sites while permitting inhibition at polar sites. This ensures cell division at the proper site by restricting the formation of a division septum at the midpoint of the long axis of the cell. This Ectopseudomonas mendocina (strain ymp) (Pseudomonas mendocina) protein is Cell division topological specificity factor.